A 209-amino-acid polypeptide reads, in one-letter code: RNA chaperone ProQ (209 aa).

Positions 105-148 (ESQDKAKAKRAALAPKPAAKKAPKKVAVPQRAKTERPAKPAPKA) are disordered.

This sequence belongs to the ProQ family.

The protein localises to the cytoplasm. RNA chaperone with significant RNA binding, RNA strand exchange and RNA duplexing activities. This Shewanella baltica (strain OS223) protein is RNA chaperone ProQ.